We begin with the raw amino-acid sequence, 308 residues long: Maspardin (308 aa).

One can recognise an AB hydrolase-1 domain in the interval 87–159 (FCDGFRKLLD…NSFWLMPAFM (73 aa)). Ser304 carries the phosphoserine modification.

The protein belongs to the AB hydrolase superfamily. As to quaternary structure, interacts with CD4. Interacts with ALDH16A1. Expressed in cell lines FT.1 and in a L cell fibroblast derivative (at protein level).

It is found in the cytoplasm. Its function is as follows. May play a role as a negative regulatory factor in CD4-dependent T-cell activation. In Mus musculus (Mouse), this protein is Maspardin (Spg21).